A 142-amino-acid polypeptide reads, in one-letter code: Hemoglobin subunit alpha (142 aa).

In terms of domain architecture, Globin spans 2–142 (VLSDADKTHV…VATVLTSKYR (141 aa)). Position 4 is a phosphoserine (S4). N6-succinyllysine is present on K8. Residue T9 is modified to Phosphothreonine. K12 bears the N6-succinyllysine mark. Position 17 is an N6-acetyllysine; alternate (K17). K17 carries the N6-succinyllysine; alternate modification. A Phosphotyrosine modification is found at Y25. S36 carries the post-translational modification Phosphoserine. The residue at position 41 (K41) is an N6-succinyllysine. At S50 the chain carries Phosphoserine. H59 contributes to the O2 binding site. Residue H88 participates in heme b binding. Position 103 is a phosphoserine (S103). A Phosphothreonine modification is found at T109. S125 and S132 each carry phosphoserine. Phosphothreonine occurs at positions 135 and 138. Residue S139 is modified to Phosphoserine.

This sequence belongs to the globin family. As to quaternary structure, heterotetramer of two alpha chains and two beta chains. As to expression, red blood cells.

Its function is as follows. Involved in oxygen transport from the lung to the various peripheral tissues. In terms of biological role, hemopressin acts as an antagonist peptide of the cannabinoid receptor CNR1. Hemopressin-binding efficiently blocks cannabinoid receptor CNR1 and subsequent signaling. In Dasyurus viverrinus (Eastern quoll), this protein is Hemoglobin subunit alpha (HBA).